Consider the following 98-residue polypeptide: Large ribosomal subunit protein bL28 (98 aa).

It belongs to the bacterial ribosomal protein bL28 family.

The chain is Large ribosomal subunit protein bL28 from Phenylobacterium zucineum (strain HLK1).